We begin with the raw amino-acid sequence, 413 residues long: MTVNRPRGTRDFLPADTARRRYVESVMRNVVRNWGYSEIITPTFEHLDLFTLKSGEGIVGELYNFTDKGGRDMTLRPELTAPVMRLYVNELQPFPKPLKLFYFENCFRYERPQKGRFREFWQFGVELIGSGKSDSDAEVIALADALLKAVGIQGDMKLGNLAVIRTLLKGLEPEIVSKVMRLVDKKEYAGLESLLEEIGAEEQLKSDLFHLIHLEGKYILPKVKEIVGNIPELVGFEKTLKLLDAYGVDYSLDFGIARGLDYYTGMVFEVYAEGLGAQKQVCGGGSYQLIQLFGGGDVPSTGFGIGFDRIMEICPLVPPASKNLVLVSKPATHIEAVKVASELRNYLPVQIDLMERNFKAQFSYANTINADYVVIVGEKELEAGKLTLRDMVSGEQELLTLEEIIEKITGQQD.

The protein belongs to the class-II aminoacyl-tRNA synthetase family.

Its subcellular location is the cytoplasm. It carries out the reaction tRNA(His) + L-histidine + ATP = L-histidyl-tRNA(His) + AMP + diphosphate + H(+). The protein is Histidine--tRNA ligase of Methanosarcina acetivorans (strain ATCC 35395 / DSM 2834 / JCM 12185 / C2A).